The chain runs to 3394 residues: Protein PFC0760c (3394 aa).

Low complexity-rich tracts occupy residues 471 to 508 (NNNDNDNNNDNNNNNNNNNDNNNNNNNDNNNNNNNYNN), 515 to 528 (NMNSGNHPNSNNLH), and 786 to 841 (NNQN…NQNN). Disordered regions lie at residues 471-539 (NNND…DENN), 779-844 (MSSN…NAGI), 1038-1099 (NKKK…NNDD), 1892-1918 (TTTTTNNNNNNDNNNDNNNDNNDNNND), 2648-2693 (KMDL…DNHL), 2835-2909 (AKNE…NSNN), 3000-3057 (VSVG…DVNT), and 3107-3394 (DYVN…NSEE). A compositionally biased stretch (basic and acidic residues) spans 1038–1097 (NKKKNNDGDNKSQEDDDGNKKKNNDGDNKSQEDDDGNKKKNNDGDNKSQEDDYGNKKKNN). Over residues 2657–2671 (GDDDDDDDDDDDDDN) the composition is skewed to acidic residues. Over residues 2672 to 2686 (NNNNNNNNNNNNNNM) the composition is skewed to low complexity. Polar residues predominate over residues 2836–2846 (KNENYPVSTHY). 2 stretches are compositionally biased toward low complexity: residues 2855–2865 (DNINNDNNNDN) and 2872–2909 (NDNINNDNNNDNINNDNINNDNINNDNNNDNNNDNSNN). Composition is skewed to acidic residues over residues 3007-3047 (DNND…EEKE) and 3147-3257 (DDDE…DDND). Positions 3258–3292 (NDHNDDNNDEEKYSCHDDKNEHTNNDLLNIDHDNN) are enriched in basic and acidic residues. Polar residues predominate over residues 3300 to 3309 (LYSTYNVSVS). The span at 3310–3320 (HNKDPSNKENE) shows a compositional bias: basic and acidic residues. The span at 3321-3330 (IQNLISIDSS) shows a compositional bias: polar residues. A compositionally biased stretch (acidic residues) spans 3331-3379 (NENDENDENDENDENDENDENDENDENDENDENDEKDENDENDENDENF). The span at 3385-3394 (GTLNEMNSEE) shows a compositional bias: polar residues.

In Plasmodium falciparum (isolate 3D7), this protein is Protein PFC0760c.